Consider the following 30-residue polypeptide: Cyclotide hyen-E (30 aa).

Residues 1-30 (GVPCGESCVYIPCFTGIINCSCRDKVCYNN) constitute a cross-link (cyclopeptide (Gly-Asn)). 3 disulfide bridges follow: Cys4-Cys20, Cys8-Cys22, and Cys13-Cys27.

This is a cyclic peptide. In terms of tissue distribution, detected in stems (at protein level).

Functionally, probably participates in a plant defense mechanism. Has cytotoxic activity against HUVEC cells (LC(50)= 2.17 uM) and various cancer cells including HeLa (LC(50)= 3.05 uM), MCF-7 and K562. Displays very weak hemolytic activity. Binds to and induces leakage in phospholipd membranes, particularly ones containing 1-palmitoyl-2-oleophosphatidylethanolamine (POPE). In Pigea enneasperma (Spade flower), this protein is Cyclotide hyen-E.